Here is a 440-residue protein sequence, read N- to C-terminus: 3-phosphoshikimate 1-carboxyvinyltransferase (440 aa).

The 3-phosphoshikimate site is built by Lys28, Ser29, and Arg33. Lys28 contacts phosphoenolpyruvate. Residues Gly98 and Arg126 each contribute to the phosphoenolpyruvate site. Residues Ser171, Gln173, Asp318, and Lys345 each coordinate 3-phosphoshikimate. Position 173 (Gln173) interacts with phosphoenolpyruvate. Asp318 functions as the Proton acceptor in the catalytic mechanism. Positions 349 and 391 each coordinate phosphoenolpyruvate.

It belongs to the EPSP synthase family. In terms of assembly, monomer.

It localises to the cytoplasm. It carries out the reaction 3-phosphoshikimate + phosphoenolpyruvate = 5-O-(1-carboxyvinyl)-3-phosphoshikimate + phosphate. Its pathway is metabolic intermediate biosynthesis; chorismate biosynthesis; chorismate from D-erythrose 4-phosphate and phosphoenolpyruvate: step 6/7. Catalyzes the transfer of the enolpyruvyl moiety of phosphoenolpyruvate (PEP) to the 5-hydroxyl of shikimate-3-phosphate (S3P) to produce enolpyruvyl shikimate-3-phosphate and inorganic phosphate. The protein is 3-phosphoshikimate 1-carboxyvinyltransferase of Anaeromyxobacter dehalogenans (strain 2CP-C).